The primary structure comprises 942 residues: Inter-alpha-trypsin inhibitor heavy chain H5 (942 aa).

The N-terminal stretch at 1 to 16 is a signal peptide; the sequence is MLLLLGLCLGLSLCVG. In terms of domain architecture, VIT spans 35–161; it reads VPRQVRLLQR…KAAFFLSYEE (127 aa). N-linked (GlcNAc...) asparagine glycans are attached at residues Asn-97 and Asn-127. Disordered regions lie at residues 116–136 and 208–227; these read KKSGDRVKEKRNKTTEENGEK and SRQRGSGRGEDDSGPPPSTV. N-linked (GlcNAc...) asparagine glycosylation is found at Asn-231, Asn-421, and Asn-508. The region spanning 295–478 is the VWFA domain; it reads NVVFVLDSSA…SQLIGFYDEI (184 aa). Positions 550–571 are disordered; that stretch reads QKAGKDVTGSPRPGGDGEGDTN. Asn-776, Asn-795, and Asn-862 each carry an N-linked (GlcNAc...) asparagine glycan.

Belongs to the ITIH family. In terms of tissue distribution, abundantly expressed in placenta. Less abundant expression in mammary gland and ovary. Expression is barely detectable levels in all other tissues tested.

The protein localises to the secreted. Functionally, may act as a tumor suppressor. This Homo sapiens (Human) protein is Inter-alpha-trypsin inhibitor heavy chain H5 (ITIH5).